Reading from the N-terminus, the 148-residue chain is Large ribosomal subunit protein uL15 (148 aa).

A compositionally biased stretch (basic residues) spans 1 to 30 (MSTHKKKTRKLRGHVSHGHGRIGKHRKHPG). The tract at residues 1–37 (MSTHKKKTRKLRGHVSHGHGRIGKHRKHPGGRGNAGG) is disordered.

The protein belongs to the universal ribosomal protein uL15 family.

The chain is Large ribosomal subunit protein uL15 (RpL27A) from Tenebrio molitor (Yellow mealworm beetle).